The chain runs to 347 residues: Probable dual-specificity RNA methyltransferase RlmN (347 aa).

Catalysis depends on glutamate 93, which acts as the Proton acceptor. In terms of domain architecture, Radical SAM core spans 99–333 (TEKRLTACLS…VSLRKSRGLD (235 aa)). Cysteine 106 and cysteine 338 are disulfide-bonded. 3 residues coordinate [4Fe-4S] cluster: cysteine 113, cysteine 117, and cysteine 120. S-adenosyl-L-methionine-binding positions include 160 to 161 (GE), serine 190, 219 to 221 (SLH), and asparagine 295. Cysteine 338 acts as the S-methylcysteine intermediate in catalysis.

The protein belongs to the radical SAM superfamily. RlmN family. [4Fe-4S] cluster is required as a cofactor.

It localises to the cytoplasm. The catalysed reaction is adenosine(2503) in 23S rRNA + 2 reduced [2Fe-2S]-[ferredoxin] + 2 S-adenosyl-L-methionine = 2-methyladenosine(2503) in 23S rRNA + 5'-deoxyadenosine + L-methionine + 2 oxidized [2Fe-2S]-[ferredoxin] + S-adenosyl-L-homocysteine. It catalyses the reaction adenosine(37) in tRNA + 2 reduced [2Fe-2S]-[ferredoxin] + 2 S-adenosyl-L-methionine = 2-methyladenosine(37) in tRNA + 5'-deoxyadenosine + L-methionine + 2 oxidized [2Fe-2S]-[ferredoxin] + S-adenosyl-L-homocysteine. Its function is as follows. Specifically methylates position 2 of adenine 2503 in 23S rRNA and position 2 of adenine 37 in tRNAs. The polypeptide is Probable dual-specificity RNA methyltransferase RlmN (Prochlorococcus marinus (strain MIT 9301)).